Here is a 172-residue protein sequence, read N- to C-terminus: Large ribosomal subunit protein uL10 (172 aa).

Belongs to the universal ribosomal protein uL10 family. As to quaternary structure, part of the ribosomal stalk of the 50S ribosomal subunit. The N-terminus interacts with L11 and the large rRNA to form the base of the stalk. The C-terminus forms an elongated spine to which L12 dimers bind in a sequential fashion forming a multimeric L10(L12)X complex.

Its function is as follows. Forms part of the ribosomal stalk, playing a central role in the interaction of the ribosome with GTP-bound translation factors. The chain is Large ribosomal subunit protein uL10 (rplJ) from Liberibacter asiaticus (Citrus greening disease).